Reading from the N-terminus, the 1580-residue chain is Transcriptional activator GLI3 (1580 aa).

Position 1 is an N-acetylmethionine (methionine 1). Polar residues-rich tracts occupy residues 1 to 10 (MEAQSHSSTT) and 58 to 78 (ITMQ…PSTS). The interval 1–79 (MEAQSHSSTT…KVSEEPSTSS (79 aa)) is disordered. An Omega-N-methylarginine modification is found at arginine 175. Positions 368-475 (QSLGSAFGHS…DKDESKQEPE (108 aa)) are disordered. Residues 401 to 427 (NPVQVSSGPSESSQNKPTSESAVSSTG) show a composition bias toward polar residues. Glycyl lysine isopeptide (Lys-Gly) (interchain with G-Cter in SUMO2) cross-links involve residues lysine 438 and lysine 462. The segment covering 461–474 (VKEEGDKDESKQEP) has biased composition (basic and acidic residues). C2H2-type zinc fingers lie at residues 480 to 505 (TNCH…NNDH), 513 to 540 (FVCR…MRRH), 546 to 570 (HKCT…LRSH), 576 to 601 (YVCE…NRTH), and 607 to 632 (YVCK…KTVH). The interval 620 to 728 (DPSSLRKHVK…PISNYSNSGL (109 aa)) is disordered. Positions 632-648 (HGPEAHVTKKQRGDIHP) are enriched in basic and acidic residues. A Phosphoserine modification is found at serine 664. Residues 684 to 699 (SKREECLQVKTVKAEK) show a composition bias toward basic and acidic residues. The span at 703–726 (SQPSPGGQSSCSSQQSPISNYSNS) shows a compositional bias: low complexity. A mediates interaction with DZIP1 region spans residues 745-845 (DETPIMDSTI…VDVTMLNMLN (101 aa)). A Glycyl lysine isopeptide (Lys-Gly) (interchain with G-Cter in ubiquitin) cross-link involves residue lysine 773. Lysine 779 is covalently cross-linked (Glycyl lysine isopeptide (Lys-Gly) (interchain with G-Cter in SUMO2); alternate). Residue lysine 779 forms a Glycyl lysine isopeptide (Lys-Gly) (interchain with G-Cter in ubiquitin); alternate linkage. Residues lysine 784 and lysine 800 each participate in a glycyl lysine isopeptide (Lys-Gly) (interchain with G-Cter in ubiquitin) cross-link. Residues serine 849, serine 865, serine 877, and serine 907 each carry the phosphoserine; by PKA modification. Residues 863-882 (RSSGISPCFSSRRSSEASQA) show a composition bias toward low complexity. The tract at residues 863–918 (RSSGISPCFSSRRSSEASQAEGRPQNVSVADSYDPISTDASRRSSEASQSDGLPSL) is disordered. Positions 908–918 (EASQSDGLPSL) are enriched in polar residues. 2 positions are modified to phosphoserine; by PKA: serine 980 and serine 1006. Residues 981–1042 (DGGAHGYGRR…PAMATSAEKR (62 aa)) are disordered.

It belongs to the GLI C2H2-type zinc-finger protein family. In terms of assembly, the full-length GLI3 form (GLI3FL) interacts with SUFU and this interaction regulates the formation of either repressor or activator forms of GLI3. Its association with SUFU is regulated by Hh signaling and dissociation of the SUFU-GLI3 interaction requires the presence of the ciliary motor KIF3A. Interacts with KIF7. The activator form of GLI3 (GLI3A) but not the repressor form (GLI3R) can interact with TRPS1. The phosphorylated form interacts with BTRC. Interacts with ZIC1. Interacts with ZIC3 (via C2H2-type domains 3, 4 and 5); the interaction enhances its transcriptional activity. Interacts with WRD11; the interaction associates EMX1 with GLI3. Interacts with DZIP1; retains GLI3 within the cytoplasm. Post-translationally, phosphorylated on multiple sites by protein kinase A (PKA) and phosphorylation by PKA primes further phosphorylation by CK1 and GSK3. Phosphorylated by DYRK2 (in vitro). Phosphorylation is essential for its proteolytic processing. In terms of processing, transcriptional repressor GLI3R, a C-terminally truncated form, is generated from the full-length GLI3 protein (GLI3FL/GLI3-190) through proteolytic processing. This process requires PKA-primed phosphorylation of GLI3, ubiquitination of GLI3 and the presence of BTRC. GLI3FL is complexed with SUFU in the cytoplasm and is maintained in a neutral state. Without the Hh signal, the SUFU-GLI3 complex is recruited to cilia, leading to the efficient processing of GLI3FL into GLI3R. GLI3R formation leads to its dissociation from SUFU, allowing it to translocate into the nucleus, and repress Hh target genes. When Hh signaling is initiated, SUFU dissociates from GLI3FL and this has two consequences. First, GLI3R production is halted. Second, free GLI3FL translocates to the nucleus, where it is phosphorylated, destabilized, and converted to a transcriptional activator (GLI3A). Phosphorylated in vitro by ULK3. As to expression, is expressed in a wide variety of normal adult tissues, including lung, colon, spleen, placenta, testis, and myometrium.

The protein resides in the nucleus. It localises to the cytoplasm. The protein localises to the cell projection. It is found in the cilium. In terms of biological role, has a dual function as a transcriptional activator and a repressor of the sonic hedgehog (Shh) pathway, and plays a role in limb development. The full-length GLI3 form (GLI3FL) after phosphorylation and nuclear translocation, acts as an activator (GLI3A) while GLI3R, its C-terminally truncated form, acts as a repressor. A proper balance between the GLI3 activator and the repressor GLI3R, rather than the repressor gradient itself or the activator/repressor ratio gradient, specifies limb digit number and identity. In concert with TRPS1, plays a role in regulating the size of the zone of distal chondrocytes, in restricting the zone of PTHLH expression in distal cells and in activating chondrocyte proliferation. Binds to the minimal GLI-consensus sequence 5'-GGGTGGTC-3'. This Homo sapiens (Human) protein is Transcriptional activator GLI3 (GLI3).